The primary structure comprises 239 residues: Gamma-lactamase MBL2 (239 aa).

Zn(2+) is bound by residues histidine 56, histidine 58, aspartate 60, histidine 61, histidine 141, and aspartate 165.

This sequence belongs to the metallo-beta-lactamase superfamily.

Gamma-lactamase; part of the Fusarium detoxification of benzoxazolinone cluster 2 (FDB2) involved in the degradation of benzoxazolinones produced by the host plant. Maize, wheat, and rye produce the 2 benzoxazinone phytoanticipins 2,4-dihy-droxy-7-methoxy-1,4-benzoxazin-3-one (DIMBOA) and 2,4-dihydroxy-1,4-benzoxazin-3-one (DIBOA) that, due to their inherent instability once released, spontaneously degrade to the more stable corresponding benzoxazolinones, 6-methoxy-2-benzoxazolinone (MBOA) and 2-benzoxazolinone (BOA), respectively. The first step in the detoxification of benzoxazolinones involves the hydrolysis of the cyclic ester bond of benzoxazolinones by the FDB1 cluster gamma-lactamase MBL1 to aminophenols. MBL1 is able to convert BOA into 2-aminophenol (2-AP), as well as MBOA into 5-methoxy-2-aminophenol (2-AMP). The FDB2 cluster N-malonyltransferase FDB2/NAT1 then metabolizes aminophenols via N-malonylation to non-toxic malonamic acids. FDB2/NAT1 converts 2-AP into N-(2-hydroxyphenyl) malonamic acid (HPMA) and 2-AMP into N-(2-hydroxy-4-methoxyphenyl) malonamic acid (HMPMA). The duplicated dienlactone hydrolases DLH1 and DLH2 may provide redundant function for hydrolyzing the lactone moiety in the BOA molecule. The roles of the amidases and other enzymes encoded by the 2 FDB clusters have not been identified so far. The chain is Gamma-lactamase MBL2 from Gibberella moniliformis (strain M3125 / FGSC 7600) (Maize ear and stalk rot fungus).